Here is a 292-residue protein sequence, read N- to C-terminus: Nitrogenase iron protein 1 (292 aa).

G12–S19 contacts ATP. C101 is a binding site for [4Fe-4S] cluster. At R104 the chain carries ADP-ribosylarginine; by dinitrogenase reductase ADP-ribosyltransferase. C135 provides a ligand contact to [4Fe-4S] cluster.

The protein belongs to the NifH/BchL/ChlL family. As to quaternary structure, homodimer. Requires [4Fe-4S] cluster as cofactor. Post-translationally, the reversible ADP-ribosylation of Arg-104 inactivates the nitrogenase reductase and regulates nitrogenase activity.

The enzyme catalyses N2 + 8 reduced [2Fe-2S]-[ferredoxin] + 16 ATP + 16 H2O = H2 + 8 oxidized [2Fe-2S]-[ferredoxin] + 2 NH4(+) + 16 ADP + 16 phosphate + 6 H(+). Its function is as follows. The key enzymatic reactions in nitrogen fixation are catalyzed by the nitrogenase complex, which has 2 components: the iron protein and the molybdenum-iron protein. The sequence is that of Nitrogenase iron protein 1 (nifH1) from Paenibacillus durus (Paenibacillus azotofixans).